The primary structure comprises 456 residues: G-protein coupled receptor 39 (456 aa).

The Extracellular portion of the chain corresponds to 1-34; it reads MASSSGSNHICSRVIDHSHVPEFEVATWIKITLI. Intrachain disulfides connect C11/C191 and C108/C210. Residues H17 and H19 each coordinate Zn(2+). The helical transmembrane segment at 35–55 threads the bilayer; sequence LVYLIIFVVGILGNSVTIRVT. Residues 56-69 lie on the Cytoplasmic side of the membrane; that stretch reads QVLQKKGYLQKEVT. Residues 70-89 traverse the membrane as a helical segment; it reads DHMVSLACSDILVFLIGMPM. At 90 to 109 the chain is on the extracellular side; the sequence is EFYSIIWNPLTTPSYALSCK. A helical membrane pass occupies residues 110–131; that stretch reads LHTFLFETCSYATLLHVLTLSF. Residues 132 to 151 are Cytoplasmic-facing; sequence ERYIAICHPFKYKAVSGPRQ. Residues 152 to 172 form a helical membrane-spanning segment; the sequence is VKLLIGFVWVTSALVALPLLF. Residues 173–217 are Extracellular-facing; it reads AMGIEYPLVNVPTHKGLNCNLSRTRHHDEPGNSNMSICTNLSNRW. N192 and N206 each carry an N-linked (GlcNAc...) asparagine glycan. The chain crosses the membrane as a helical span at residues 218–242; it reads EVFQSSIFGAFAVYLVVLASVAFMC. Residues 243-283 lie on the Cytoplasmic side of the membrane; that stretch reads WNMMKVLMKSKQGTLAGTGPQLQLRKSESEESRTARRQTII. The helical transmembrane segment at 284–305 threads the bilayer; that stretch reads FLRLIVVTLAVCWMPNQIRRIM. Over 306–323 the chain is Extracellular; sequence AAAKPKHDWTRTYFRAYM. The chain crosses the membrane as a helical span at residues 324-344; it reads ILLPFSDTFFYLSSVVNPLLY. Topologically, residues 345–456 are cytoplasmic; that stretch reads NVSSQQFRKV…TENSLQEQEV (112 aa). S397 bears the Phosphoserine mark. Positions 415–456 are disordered; it reads FQTEAKPGEAKPQPLSPESPQTGSETKPAGSTTENSLQEQEV. Positions 430-456 are enriched in polar residues; it reads SPESPQTGSETKPAGSTTENSLQEQEV.

The protein belongs to the G-protein coupled receptor 1 family. Interacts with HTR1A. Interacts with GALR1. In terms of tissue distribution, expression is detected in septumamygdala, parietal cells, enterocytes, neurons and pancreas, in peripheral organs such as the duodenum and kidney but not in the pituitary and hypothalamus.

The protein localises to the cell membrane. Functionally, zinc-sensing receptor that can sense changes in extracellular Zn(2+), mediate Zn(2+) signal transmission, and participates in the regulation of numerous physiological processes including glucose homeostasis regulation, gastrointestinal mobility, hormone secretion and cell death. Activation by Zn(2+) in keratinocytes increases the intracellular concentration of Ca(2+) and activates the ERK/MAPK and PI3K/AKT signaling pathways leading to epithelial repair. Plays an essential role in normal wound healing by inducing the production of cytokines including the major inflammatory cytokine IL6 via the PKC/MAPK/CEBPB pathway. Regulates adipose tissue metabolism, especially lipolysis, and regulates the function of lipases, such as hormone-sensitive lipase and adipose triglyceride lipase. Plays a role in the inhibition of cell death and protects against oxidative, endoplasmic reticulum and mitochondrial stress by inducing secretion of the cytoprotective pigment epithelium-derived growth factor (PEDF) and probably other protective transcripts in a GNA13/RHOA/SRE-dependent manner. Forms dynamic heteroreceptor complexes with HTR1A and GALR1 depending on cell type or specific physiological states, resulting in signaling diversity: HTR1A-GPR39 shows additive increase in signaling along the serum response element (SRE) and NF-kappa-B pathways while GALR1 acts as an antagonist blocking SRE. The chain is G-protein coupled receptor 39 (Gpr39) from Mus musculus (Mouse).